Here is a 354-residue protein sequence, read N- to C-terminus: MATQEEKQKALAAALGQIEKQFGKGSIMKLGDTKTLDVESISTGSLGLDVALGIGGLPMGRIVEIFGPESSGKTTLTLSVIAQAQKAGKTCAFIDAEHALDPIYAAKLGVDVKELFVSQPDNGEQALEICDALVRSGAIDVIIVDSVAALTPKAEIEGDMGDSHMGLQARLMSQALRKLTGQIKNANCLVVFINQIRMKIGVMFGNPETTTGGNALKFYSSVRLDIRRTGSVKDGENIIGNETRVKVVKNKLAAPFRQVDFQILYGEGISKAGELLELGVKHKLVEKSGAWYSYNGEKIGQGKANSMKWLNENIEKSDELEARLRAELVANPEQALMADIEQSENNTESESDFE.

Residue 67-74 participates in ATP binding; that stretch reads GPESSGKT.

It belongs to the RecA family.

The protein localises to the cytoplasm. In terms of biological role, can catalyze the hydrolysis of ATP in the presence of single-stranded DNA, the ATP-dependent uptake of single-stranded DNA by duplex DNA, and the ATP-dependent hybridization of homologous single-stranded DNAs. It interacts with LexA causing its activation and leading to its autocatalytic cleavage. This is Protein RecA from Haemophilus influenzae (strain 86-028NP).